The chain runs to 112 residues: Thyroid transcription factor 1 (112 aa).

Positions 1–60 (RRNRRVLFSQAQVYELERRFKQQKYLSAPEREHLASMIHLTPTQVKIWFQNHRYKMKRQA) form a DNA-binding region, homeobox. The tract at residues 59-100 (QAKDKAAQQQLQQDSGGGGGGGGAGCPQQQQAQQQSPRRVAV) is disordered. A compositionally biased stretch (gly residues) spans 73–83 (SGGGGGGGGAG). Residues 84–93 (CPQQQQAQQQ) show a composition bias toward low complexity.

Belongs to the NK-2 homeobox family. In terms of processing, phosphorylated on serine residues.

The protein resides in the nucleus. Transcription factor that binds and activates the promoter of thyroid specific genes such as thyroglobulin, thyroperoxidase, and thyrotropin receptor. Crucial in the maintenance of the thyroid differentiation phenotype. May play a role in lung development and surfactant homeostasis. The polypeptide is Thyroid transcription factor 1 (TITF1) (Cavia porcellus (Guinea pig)).